Here is a 453-residue protein sequence, read N- to C-terminus: Homogentisate 1,2-dioxygenase (453 aa).

The segment at 1 to 42 is disordered; that stretch reads MLEKAEKQRRAGSGQQRAAGYMPGFGNDFETESLPGALPQGQ. Residue histidine 306 is the Proton acceptor of the active site. Residues histidine 349 and glutamate 355 each contribute to the Fe cation site. Homogentisate is bound by residues tyrosine 364 and histidine 385. Histidine 385 provides a ligand contact to Fe cation.

The protein belongs to the homogentisate dioxygenase family. Hexamer; dimer of trimers. Fe cation serves as cofactor.

It carries out the reaction homogentisate + O2 = 4-maleylacetoacetate + H(+). Its pathway is amino-acid degradation; L-phenylalanine degradation; acetoacetate and fumarate from L-phenylalanine: step 4/6. Its function is as follows. Involved in the catabolism of homogentisate (2,5-dihydroxyphenylacetate or 2,5-OH-PhAc), a central intermediate in the degradation of phenylalanine and tyrosine. Catalyzes the oxidative ring cleavage of the aromatic ring of homogentisate to yield maleylacetoacetate. This Rhizobium meliloti (strain 1021) (Ensifer meliloti) protein is Homogentisate 1,2-dioxygenase.